Reading from the N-terminus, the 373-residue chain is Cell surface Cu-only superoxide dismutase ARB_03674 (373 aa).

The N-terminal stretch at 1–55 is a signal peptide; the sequence is MIWKQPPRRMGEMGGSLSRRFGNAAASWAVWRVSRSCFSLLFFFYFFLFFSSSSL. N-linked (GlcNAc...) asparagine glycosylation is found at Asn-75 and Asn-141. Cu cation-binding residues include His-194, His-196, and His-212. The cysteines at positions 206 and 289 are disulfide-linked. Residues Asn-254 and Asn-274 are each glycosylated (N-linked (GlcNAc...) asparagine). His-280 is a Cu cation binding site. N-linked (GlcNAc...) asparagine glycans are attached at residues Asn-283 and Asn-291. The disordered stretch occupies residues 329–348; that stretch reads GHAPTISATYTPTPTPSPPA. Over residues 331–340 the composition is skewed to low complexity; that stretch reads APTISATYTP. Residue Gly-352 is the site of GPI-anchor amidated glycine attachment. Positions 353–373 are cleaved as a propeptide — removed in mature form; sequence AGRLVGFSLGAIMAALVPLAL.

Belongs to the Cu-Zn superoxide dismutase family. Monomer. Cu cation serves as cofactor. Post-translationally, the GPI-anchor is attached to the protein in the endoplasmic reticulum and serves to target the protein to the cell surface. There, the glucosamine-inositol phospholipid moiety is cleaved off and the GPI-modified mannoprotein is covalently attached via its lipidless GPI glycan remnant to the 1,6-beta-glucan of the outer cell wall layer.

Its subcellular location is the secreted. It is found in the cell wall. It localises to the cell membrane. It catalyses the reaction 2 superoxide + 2 H(+) = H2O2 + O2. Functionally, superoxide dismutases serve to convert damaging superoxide radicals, a key form of ROS, to less damaging hydrogen peroxide that can be converted into water by catalase action. Degrades host-derived reactive oxygen species to escape innate immune surveillance. Involved in the occurrence of miconazole-tolerant persisters in biofilms. Persisters are cells that survive high doses of an antimicrobial agent. The unusual attributes of SOD5-like fungal proteins, including the absence of zinc and an open active site that readily captures extracellular copper, make these SODs well suited to meet challenges in zinc and copper availability at the host-pathogen interface. This is Cell surface Cu-only superoxide dismutase ARB_03674 from Arthroderma benhamiae (strain ATCC MYA-4681 / CBS 112371) (Trichophyton mentagrophytes).